Reading from the N-terminus, the 396-residue chain is 8-amino-7-oxononanoate synthase (396 aa).

Arginine 31 contributes to the substrate binding site. 118–119 is a binding site for pyridoxal 5'-phosphate; the sequence is GY. Histidine 143 serves as a coordination point for substrate. Residues serine 189, histidine 217, and threonine 245 each contribute to the pyridoxal 5'-phosphate site. N6-(pyridoxal phosphate)lysine is present on lysine 248. Threonine 362 is a substrate binding site.

This sequence belongs to the class-II pyridoxal-phosphate-dependent aminotransferase family. BioF subfamily. As to quaternary structure, homodimer. It depends on pyridoxal 5'-phosphate as a cofactor.

The catalysed reaction is 6-carboxyhexanoyl-[ACP] + L-alanine + H(+) = (8S)-8-amino-7-oxononanoate + holo-[ACP] + CO2. Its pathway is cofactor biosynthesis; biotin biosynthesis. Its function is as follows. Catalyzes the decarboxylative condensation of pimeloyl-[acyl-carrier protein] and L-alanine to produce 8-amino-7-oxononanoate (AON), [acyl-carrier protein], and carbon dioxide. This is 8-amino-7-oxononanoate synthase from Methylobacillus flagellatus (strain ATCC 51484 / DSM 6875 / VKM B-1610 / KT).